We begin with the raw amino-acid sequence, 455 residues long: Phosphoglucosamine mutase (455 aa).

Serine 104 (phosphoserine intermediate) is an active-site residue. Serine 104, aspartate 243, aspartate 245, and aspartate 247 together coordinate Mg(2+). Serine 104 carries the post-translational modification Phosphoserine.

It belongs to the phosphohexose mutase family. It depends on Mg(2+) as a cofactor. In terms of processing, activated by phosphorylation.

It catalyses the reaction alpha-D-glucosamine 1-phosphate = D-glucosamine 6-phosphate. Catalyzes the conversion of glucosamine-6-phosphate to glucosamine-1-phosphate. In Synechococcus sp. (strain CC9311), this protein is Phosphoglucosamine mutase.